The chain runs to 95 residues: Defensin-like protein 247 (95 aa).

Residues 1–24 (MKFAAIFLVTCVFFSLFSSNLSQG) form the signal peptide. Disulfide bonds link cysteine 37/cysteine 94, cysteine 48/cysteine 77, cysteine 56/cysteine 87, and cysteine 75/cysteine 89.

The protein belongs to the DEFL family.

The protein resides in the secreted. The polypeptide is Defensin-like protein 247 (SCRL6) (Arabidopsis thaliana (Mouse-ear cress)).